The chain runs to 178 residues: MTKKEQALIEQYAKSLVEVASEHHSLDALQADVLAILETFVTTNLDQSLSSLAVPHAEKIKLLTLLKGSNSVYMNNFLNLILQNEREAYLYQMLQTVLNEIAIVSNQYDVTVTSSLPLTEEQKSRVRAVVAKKFAVTAGRLIEKVDPSLIGGFIISVNNKVIDTSIRRQLQAFKMNLK.

It belongs to the ATPase delta chain family. As to quaternary structure, F-type ATPases have 2 components, F(1) - the catalytic core - and F(0) - the membrane proton channel. F(1) has five subunits: alpha(3), beta(3), gamma(1), delta(1), epsilon(1). F(0) has three main subunits: a(1), b(2) and c(10-14). The alpha and beta chains form an alternating ring which encloses part of the gamma chain. F(1) is attached to F(0) by a central stalk formed by the gamma and epsilon chains, while a peripheral stalk is formed by the delta and b chains.

It is found in the cell membrane. Its function is as follows. F(1)F(0) ATP synthase produces ATP from ADP in the presence of a proton or sodium gradient. F-type ATPases consist of two structural domains, F(1) containing the extramembraneous catalytic core and F(0) containing the membrane proton channel, linked together by a central stalk and a peripheral stalk. During catalysis, ATP synthesis in the catalytic domain of F(1) is coupled via a rotary mechanism of the central stalk subunits to proton translocation. Functionally, this protein is part of the stalk that links CF(0) to CF(1). It either transmits conformational changes from CF(0) to CF(1) or is implicated in proton conduction. The sequence is that of ATP synthase subunit delta from Streptococcus pyogenes serotype M2 (strain MGAS10270).